Reading from the N-terminus, the 146-residue chain is Large ribosomal subunit protein uL15 (146 aa).

Residues 1-51 are disordered; sequence MKLHELQPAAGSRKVRNRVGRGTSSGNGKTSGRGQKGQKARSGGGVRLGFE. Gly residues-rich tracts occupy residues 23–35 and 42–51; these read TSSGNGKTSGRGQ and SGGGVRLGFE.

It belongs to the universal ribosomal protein uL15 family. Part of the 50S ribosomal subunit.

In terms of biological role, binds to the 23S rRNA. This Streptococcus sanguinis (strain SK36) protein is Large ribosomal subunit protein uL15.